The sequence spans 165 residues: Regulator of sigma D (165 aa).

Belongs to the Rsd/AlgQ family. In terms of assembly, interacts with RpoD.

It localises to the cytoplasm. In terms of biological role, binds RpoD and negatively regulates RpoD-mediated transcription activation by preventing the interaction between the primary sigma factor RpoD with the catalytic core of the RNA polymerase and with promoter DNA. May be involved in replacement of the RNA polymerase sigma subunit from RpoD to RpoS during the transition from exponential growth to the stationary phase. The sequence is that of Regulator of sigma D from Enterobacter sp. (strain 638).